The chain runs to 179 residues: Large ribosomal subunit protein uL5 (179 aa).

It belongs to the universal ribosomal protein uL5 family. As to quaternary structure, part of the 50S ribosomal subunit; part of the 5S rRNA/L5/L18/L25 subcomplex. Contacts the 5S rRNA and the P site tRNA. Forms a bridge to the 30S subunit in the 70S ribosome.

Its function is as follows. This is one of the proteins that bind and probably mediate the attachment of the 5S RNA into the large ribosomal subunit, where it forms part of the central protuberance. In the 70S ribosome it contacts protein S13 of the 30S subunit (bridge B1b), connecting the 2 subunits; this bridge is implicated in subunit movement. Contacts the P site tRNA; the 5S rRNA and some of its associated proteins might help stabilize positioning of ribosome-bound tRNAs. This Shewanella baltica (strain OS223) protein is Large ribosomal subunit protein uL5.